Here is a 623-residue protein sequence, read N- to C-terminus: Chaperone protein HtpG (623 aa).

The a; substrate-binding stretch occupies residues 1–336 (MVSKQQTMGF…ASDLPLNISR (336 aa)). The interval 337–550 (EILQDNKQVE…EQDMGLEMQR (214 aa)) is b. The tract at residues 551 to 623 (ILQAAGQQVP…NRVNRLLVSS (73 aa)) is c.

Belongs to the heat shock protein 90 family. As to quaternary structure, homodimer.

The protein localises to the cytoplasm. Functionally, molecular chaperone. Has ATPase activity. In Legionella pneumophila (strain Paris), this protein is Chaperone protein HtpG.